The primary structure comprises 465 residues: ATP synthase subunit beta (465 aa).

Position 152-159 (152-159) interacts with ATP; sequence GGAGVGKT.

This sequence belongs to the ATPase alpha/beta chains family. F-type ATPases have 2 components, CF(1) - the catalytic core - and CF(0) - the membrane proton channel. CF(1) has five subunits: alpha(3), beta(3), gamma(1), delta(1), epsilon(1). CF(0) has three main subunits: a(1), b(2) and c(9-12). The alpha and beta chains form an alternating ring which encloses part of the gamma chain. CF(1) is attached to CF(0) by a central stalk formed by the gamma and epsilon chains, while a peripheral stalk is formed by the delta and b chains.

The protein resides in the cell membrane. The catalysed reaction is ATP + H2O + 4 H(+)(in) = ADP + phosphate + 5 H(+)(out). Its function is as follows. Produces ATP from ADP in the presence of a proton gradient across the membrane. The catalytic sites are hosted primarily by the beta subunits. This chain is ATP synthase subunit beta, found in Ruminiclostridium cellulolyticum (strain ATCC 35319 / DSM 5812 / JCM 6584 / H10) (Clostridium cellulolyticum).